The chain runs to 142 residues: Hemoglobin subunit alpha (142 aa).

Ser-1 bears the N-acetylserine mark. A Globin domain is found at 1 to 142 (SLSDKDKAAV…VALALAERYR (142 aa)). His-59 serves as a coordination point for O2. Residue His-88 coordinates heme b.

It belongs to the globin family. As to quaternary structure, hb1 is a heterotetramer of two alpha chains and two beta chains. HbC is a heterotetramer of two alpha chains and two beta-C chains. As to expression, red blood cells.

Involved in oxygen transport from gills to the various peripheral tissues. This is Hemoglobin subunit alpha (hba) from Trematomus bernacchii (Emerald rockcod).